A 1214-amino-acid chain; its full sequence is NBPF family member NBPF1 (1214 aa).

Positions 70–128 (MLRNERQFKEEKLAEQLKQAEELRQYKVLVHSQERELTQLREKLREGRDASRSLNQHLQ) form a coiled coil. The interval 162–200 (LSPENDEDEDEDVQVEEAEKVLESSAPREVQKAEESKVP) is disordered. Residues 165 to 177 (ENDEDEDEDVQVE) are compositionally biased toward acidic residues. An Olduvai 1 domain is found at 165-259 (ENDEDEDEDV…ECQDAVNILP (95 aa)). The span at 190–200 (EVQKAEESKVP) shows a compositional bias: basic and acidic residues. The stretch at 292-399 (NEKLHPQLAE…ASRSLNQHLQ (108 aa)) forms a coiled coil. The tract at residues 433 to 471 (LSPENDEDEDEDVQVEEAEKVLESSAPREVQKAEESKVP) is disordered. Residues 436-448 (ENDEDEDEDVQVE) show a composition bias toward acidic residues. One can recognise an Olduvai 2 domain in the interval 436–530 (ENDEDEDEDV…ECQDAVNILP (95 aa)). A compositionally biased stretch (basic and acidic residues) spans 461 to 471 (EVQKAEESKVP). A coiled-coil region spans residues 610-670 (KSMLRNERQF…ASCSLNQHLQ (61 aa)). 6 Olduvai domains span residues 707–799 (ENDN…HIIP), 800–888 (ENES…ATGP), 891–946 (SREL…LDMD), 947–1038 (EIEK…PPCP), 1041–1114 (SREL…RSTK), and 1116–1214 (RRRR…IFPQ). 2 disordered regions span residues 722-746 (EKVQ…EDSL) and 791-837 (WEDA…EGYS). Composition is skewed to acidic residues over residues 801–810 (NESDDEEEEE) and 821–833 (ESEE…ESWD). Residues 1102–1121 (GKGKKRRGRRSTKKRRRRGR) show a composition bias toward basic residues. Residues 1102–1136 (GKGKKRRGRRSTKKRRRRGRKEGEEDQNPPCPRLS) form a disordered region.

It belongs to the NBPF family. In terms of tissue distribution, widely expressed. The only tissue which shows a weak expression is kidney.

The protein resides in the cytoplasm. This Homo sapiens (Human) protein is NBPF family member NBPF1.